The chain runs to 260 residues: Diphthine synthase (260 aa).

Residues leucine 9, aspartate 85, isoleucine 88, threonine 113–alanine 114, leucine 168, alanine 208, and histidine 233 contribute to the S-adenosyl-L-methionine site.

Belongs to the diphthine synthase family. Homodimer.

It catalyses the reaction 2-[(3S)-amino-3-carboxypropyl]-L-histidyl-[translation elongation factor 2] + 3 S-adenosyl-L-methionine = diphthine-[translation elongation factor 2] + 3 S-adenosyl-L-homocysteine + 3 H(+). The protein operates within protein modification; peptidyl-diphthamide biosynthesis. Its function is as follows. S-adenosyl-L-methionine-dependent methyltransferase that catalyzes the trimethylation of the amino group of the modified target histidine residue in translation elongation factor 2 (EF-2), to form an intermediate called diphthine. The three successive methylation reactions represent the second step of diphthamide biosynthesis. This chain is Diphthine synthase, found in Halobacterium salinarum (strain ATCC 29341 / DSM 671 / R1).